Consider the following 256-residue polypeptide: DNA repair protein RecO (256 aa).

This sequence belongs to the RecO family.

In terms of biological role, involved in DNA repair and RecF pathway recombination. The protein is DNA repair protein RecO of Nocardia farcinica (strain IFM 10152).